We begin with the raw amino-acid sequence, 203 residues long: V-type ATP synthase subunit D (203 aa).

This sequence belongs to the V-ATPase D subunit family.

In terms of biological role, produces ATP from ADP in the presence of a proton gradient across the membrane. This is V-type ATP synthase subunit D (atpD) from Chlamydia muridarum (strain MoPn / Nigg).